The chain runs to 86 residues: Small ribosomal subunit protein bS20 (86 aa).

Belongs to the bacterial ribosomal protein bS20 family.

In terms of biological role, binds directly to 16S ribosomal RNA. The sequence is that of Small ribosomal subunit protein bS20 from Bifidobacterium adolescentis (strain ATCC 15703 / DSM 20083 / NCTC 11814 / E194a).